Consider the following 325-residue polypeptide: Ribonucleoside-diphosphate reductase small chain (325 aa).

Positions 76, 107, and 110 each coordinate Fe cation. Tyr-114 is a catalytic residue. Residues Glu-170, Glu-204, and His-207 each coordinate Fe cation.

It belongs to the ribonucleoside diphosphate reductase small chain family. As to quaternary structure, heterodimer of a large and a small subunit. It depends on Fe cation as a cofactor.

It catalyses the reaction a 2'-deoxyribonucleoside 5'-diphosphate + [thioredoxin]-disulfide + H2O = a ribonucleoside 5'-diphosphate + [thioredoxin]-dithiol. Functionally, provides the precursors necessary for DNA synthesis. Catalyzes the biosynthesis of deoxyribonucleotides from the corresponding ribonucleotides. This Encephalitozoon cuniculi (strain GB-M1) (Microsporidian parasite) protein is Ribonucleoside-diphosphate reductase small chain.